The primary structure comprises 233 residues: Probable chemoreceptor glutamine deamidase CheD (233 aa).

The protein belongs to the CheD family.

The enzyme catalyses L-glutaminyl-[protein] + H2O = L-glutamyl-[protein] + NH4(+). Functionally, probably deamidates glutamine residues to glutamate on methyl-accepting chemotaxis receptors (MCPs), playing an important role in chemotaxis. In Ralstonia nicotianae (strain ATCC BAA-1114 / GMI1000) (Ralstonia solanacearum), this protein is Probable chemoreceptor glutamine deamidase CheD.